The primary structure comprises 244 residues: Probable transcriptional regulatory protein DNO_1179 (244 aa).

The protein belongs to the TACO1 family.

The protein localises to the cytoplasm. The sequence is that of Probable transcriptional regulatory protein DNO_1179 from Dichelobacter nodosus (strain VCS1703A).